Here is a 255-residue protein sequence, read N- to C-terminus: Malonyl-[acyl-carrier protein] O-methyltransferase (255 aa).

This sequence belongs to the methyltransferase superfamily.

The enzyme catalyses malonyl-[ACP] + S-adenosyl-L-methionine = malonyl-[ACP] methyl ester + S-adenosyl-L-homocysteine. The protein operates within cofactor biosynthesis; biotin biosynthesis. Converts the free carboxyl group of a malonyl-thioester to its methyl ester by transfer of a methyl group from S-adenosyl-L-methionine (SAM). It allows to synthesize pimeloyl-ACP via the fatty acid synthetic pathway. The protein is Malonyl-[acyl-carrier protein] O-methyltransferase of Serratia marcescens.